Here is a 269-residue protein sequence, read N- to C-terminus: Cytochrome c oxidase subunit 3 (269 aa).

7 helical membrane passes run 21–41 (PWPM…GLTA), 49–69 (MFML…FKDI), 90–110 (GFLM…WAFL), 132–152 (ISAA…GVTM), 167–187 (TLYG…FQGL), 205–225 (FFAL…MLAM), and 247–267 (ILYL…VYWW).

Belongs to the cytochrome c oxidase subunit 3 family. As to quaternary structure, component of the cytochrome c oxidase (complex IV, CIV), a multisubunit enzyme composed of a catalytic core of 3 subunits and several supernumerary subunits. The complex exists as a monomer or a dimer and forms supercomplexes (SCs) in the inner mitochondrial membrane with ubiquinol-cytochrome c oxidoreductase (cytochrome b-c1 complex, complex III, CIII).

It localises to the mitochondrion inner membrane. The enzyme catalyses 4 Fe(II)-[cytochrome c] + O2 + 8 H(+)(in) = 4 Fe(III)-[cytochrome c] + 2 H2O + 4 H(+)(out). Component of the cytochrome c oxidase, the last enzyme in the mitochondrial electron transport chain which drives oxidative phosphorylation. The respiratory chain contains 3 multisubunit complexes succinate dehydrogenase (complex II, CII), ubiquinol-cytochrome c oxidoreductase (cytochrome b-c1 complex, complex III, CIII) and cytochrome c oxidase (complex IV, CIV), that cooperate to transfer electrons derived from NADH and succinate to molecular oxygen, creating an electrochemical gradient over the inner membrane that drives transmembrane transport and the ATP synthase. Cytochrome c oxidase is the component of the respiratory chain that catalyzes the reduction of oxygen to water. Electrons originating from reduced cytochrome c in the intermembrane space (IMS) are transferred via the dinuclear copper A center (CU(A)) of subunit 2 and heme A of subunit 1 to the active site in subunit 1, a binuclear center (BNC) formed by heme A3 and copper B (CU(B)). The BNC reduces molecular oxygen to 2 water molecules using 4 electrons from cytochrome c in the IMS and 4 protons from the mitochondrial matrix. This chain is Cytochrome c oxidase subunit 3 (COX3), found in Debaryomyces hansenii (strain ATCC 36239 / CBS 767 / BCRC 21394 / JCM 1990 / NBRC 0083 / IGC 2968) (Yeast).